Reading from the N-terminus, the 408-residue chain is Homogentisate geranylgeranyltransferase (408 aa).

The transit peptide at 1–68 (MQATTAAAAA…SAISQATSPR (68 aa)) directs the protein to the chloroplast. A run of 9 helical transmembrane segments spans residues 122–142 (HTIF…MKSI), 149–169 (VLKG…YVVG), 194–214 (SVAT…SIGI), 217–237 (GSVP…AYSI), 248–268 (ALLA…LAFF), 286–306 (LVFA…FKDI), 329–349 (VYQL…VVGA), 352–372 (THLL…LTLW), and 386–406 (VTSF…LIPF).

This sequence belongs to the UbiA prenyltransferase family.

It is found in the plastid. Its subcellular location is the chloroplast membrane. The catalysed reaction is homogentisate + (2E,6E,10E)-geranylgeranyl diphosphate + H(+) = 6-geranylgeranyl-2-methylbenzene-1,4-diol + CO2 + diphosphate. It functions in the pathway cofactor biosynthesis; tocopherol biosynthesis. Its function is as follows. Involved in the synthesis of tocotrienol (vitamin E). Catalyzes the condensation of homogentisate and geranylgeranyl diphosphate to form 2-methyl-6-geranylgeranylbenzoquinol. Possesses low activity with phytyl diphosphate as substrate. In Triticum aestivum (Wheat), this protein is Homogentisate geranylgeranyltransferase.